The following is a 152-amino-acid chain: Small ribosomal subunit protein bS6 (152 aa).

The disordered stretch occupies residues 96–152 (HEEGPSAMLQKRDRDDRGPREGGDRGPRREFGDRPPRRDGDFQRGPRPDRAPREDRA).

Belongs to the bacterial ribosomal protein bS6 family.

Functionally, binds together with bS18 to 16S ribosomal RNA. In Rhizobium etli (strain CIAT 652), this protein is Small ribosomal subunit protein bS6.